The primary structure comprises 151 residues: 3-hydroxyacyl-[acyl-carrier-protein] dehydratase FabZ (151 aa).

The active site involves His57.

It belongs to the thioester dehydratase family. FabZ subfamily.

The protein localises to the cytoplasm. It catalyses the reaction a (3R)-hydroxyacyl-[ACP] = a (2E)-enoyl-[ACP] + H2O. Its function is as follows. Involved in unsaturated fatty acids biosynthesis. Catalyzes the dehydration of short chain beta-hydroxyacyl-ACPs and long chain saturated and unsaturated beta-hydroxyacyl-ACPs. The polypeptide is 3-hydroxyacyl-[acyl-carrier-protein] dehydratase FabZ (Prochlorococcus marinus (strain SARG / CCMP1375 / SS120)).